Consider the following 170-residue polypeptide: Superoxide dismutase [Fe] (170 aa).

4 residues coordinate Fe cation: histidine 27, histidine 81, aspartate 163, and histidine 167.

It belongs to the iron/manganese superoxide dismutase family. As to quaternary structure, homodimer. Fe cation is required as a cofactor.

It carries out the reaction 2 superoxide + 2 H(+) = H2O2 + O2. Functionally, destroys superoxide anion radicals which are normally produced within the cells and which are toxic to biological systems. The polypeptide is Superoxide dismutase [Fe] (sodA) (Raoultella planticola (Klebsiella planticola)).